A 709-amino-acid chain; its full sequence is Translation initiation factor IF-2 (709 aa).

Basic and acidic residues-rich tracts occupy residues 47-70 (DHQYRPNTGKKEEKKAEKKTEKPK) and 105-121 (KGKETKKTEAQQQEKKL). The disordered stretch occupies residues 47–157 (DHQYRPNTGK…QPAKKEKELP (111 aa)). Residues 125-137 (AKKKGKGPAKGKK) show a composition bias toward basic residues. Positions 138-149 (QAAPAAKQAPQP) are enriched in low complexity. The region spanning 240–409 (ERPPVVTIMG…LLVSEMEELK (170 aa)) is the tr-type G domain. The tract at residues 249-256 (GHVDHGKT) is G1. 249 to 256 (GHVDHGKT) provides a ligand contact to GTP. Residues 274–278 (GITQH) form a G2 region. A G3 region spans residues 295–298 (DTPG). GTP-binding positions include 295–299 (DTPGH) and 349–352 (NKID). A G4 region spans residues 349 to 352 (NKID). Residues 385–387 (SAK) form a G5 region.

It belongs to the TRAFAC class translation factor GTPase superfamily. Classic translation factor GTPase family. IF-2 subfamily.

It localises to the cytoplasm. One of the essential components for the initiation of protein synthesis. Protects formylmethionyl-tRNA from spontaneous hydrolysis and promotes its binding to the 30S ribosomal subunits. Also involved in the hydrolysis of GTP during the formation of the 70S ribosomal complex. The sequence is that of Translation initiation factor IF-2 from Geobacillus kaustophilus (strain HTA426).